A 525-amino-acid chain; its full sequence is GMP synthase [glutamine-hydrolyzing] (525 aa).

A Glutamine amidotransferase type-1 domain is found at 9–207; it reads RILILDFGSQ…VKEICHCEAL (199 aa). Cysteine 86 functions as the Nucleophile in the catalytic mechanism. Residues histidine 181 and glutamate 183 contribute to the active site. The GMPS ATP-PPase domain maps to 208-400; it reads WTPATIIEDA…LGLPYNMLYR (193 aa). 235–241 contacts ATP; the sequence is SGGVDSS.

Homodimer.

It carries out the reaction XMP + L-glutamine + ATP + H2O = GMP + L-glutamate + AMP + diphosphate + 2 H(+). Its pathway is purine metabolism; GMP biosynthesis; GMP from XMP (L-Gln route): step 1/1. Its function is as follows. Catalyzes the synthesis of GMP from XMP. The sequence is that of GMP synthase [glutamine-hydrolyzing] from Tolumonas auensis (strain DSM 9187 / NBRC 110442 / TA 4).